The sequence spans 230 residues: Heptaprenylglyceryl phosphate synthase (230 aa).

A sn-glycerol 1-phosphate-binding site is contributed by Lys12. Mg(2+) is bound by residues Asp14 and Thr40. Sn-glycerol 1-phosphate-binding positions include Tyr159–Gly164, Gly189, and Gly209–Asp210.

The protein belongs to the GGGP/HepGP synthase family. Group I subfamily. In terms of assembly, homodimer. Mg(2+) is required as a cofactor.

It carries out the reaction sn-glycerol 1-phosphate + all-trans-heptaprenyl diphosphate = 3-heptaprenyl-sn-glycero-1-phosphate + diphosphate. It functions in the pathway membrane lipid metabolism; glycerophospholipid metabolism. In terms of biological role, prenyltransferase that catalyzes in vivo the transfer of the heptaprenyl moiety of heptaprenyl pyrophosphate (HepPP; 35 carbon atoms) to the C3 hydroxyl of sn-glycerol-1-phosphate (G1P), producing heptaprenylglyceryl phosphate (HepGP). This reaction is an ether-bond-formation step in the biosynthesis of archaea-type G1P-based membrane lipids found in Bacillales. The chain is Heptaprenylglyceryl phosphate synthase from Staphylococcus aureus (strain Mu3 / ATCC 700698).